The sequence spans 511 residues: Maturase K (511 aa).

It belongs to the intron maturase 2 family. MatK subfamily.

It localises to the plastid. The protein localises to the chloroplast. Usually encoded in the trnK tRNA gene intron. Probably assists in splicing its own and other chloroplast group II introns. This chain is Maturase K, found in Adesmia lanata.